Consider the following 193-residue polypeptide: Potassium-transporting ATPase KdpC subunit (193 aa).

A helical transmembrane segment spans residues 7 to 27 (PLVVLFVVLNAVTGLAYPAVM).

It belongs to the KdpC family. As to quaternary structure, the system is composed of three essential subunits: KdpA, KdpB and KdpC.

Its subcellular location is the cell inner membrane. Its function is as follows. Part of the high-affinity ATP-driven potassium transport (or Kdp) system, which catalyzes the hydrolysis of ATP coupled with the electrogenic transport of potassium into the cytoplasm. This subunit acts as a catalytic chaperone that increases the ATP-binding affinity of the ATP-hydrolyzing subunit KdpB by the formation of a transient KdpB/KdpC/ATP ternary complex. The sequence is that of Potassium-transporting ATPase KdpC subunit from Burkholderia cenocepacia (strain HI2424).